A 102-amino-acid chain; its full sequence is Protein Tat (102 aa).

The segment at 1–24 is interaction with human CREBBP; sequence MEPVDPRLEPWKHPGSQPKTACNN. The tract at residues 1-48 is transactivation; the sequence is MEPVDPRLEPWKHPGSQPKTACNNCYCKKCCYHCQVCFLTKGLGISYG. 3 residues coordinate Zn(2+): C22, C25, and C27. The cysteine-rich stretch occupies residues 22–37; that stretch reads CNNCYCKKCCYHCQVC. The residue at position 28 (K28) is an N6-acetyllysine; by host PCAF. Zn(2+)-binding residues include C30, H33, C34, and C37. The interval 38–48 is core; the sequence is FLTKGLGISYG. A disordered region spans residues 48-102; that stretch reads GRKKRRQRRGPPQGSQTHQVSLSKQPTSQPRGDPTGPKESKEKVERETETDPAVQ. A Nuclear localization signal, RNA-binding (TAR), and protein transduction motif is present at residues 49 to 57; that stretch reads RKKRRQRRG. Residues 49–86 are interaction with the host capping enzyme RNGTT; sequence RKKRRQRRGPPQGSQTHQVSLSKQPTSQPRGDPTGPKE. 2 positions are modified to N6-acetyllysine; by host EP300 and GCN5L2: K50 and K51. R52 and R53 each carry asymmetric dimethylarginine; by host PRMT6. Over residues 62–77 the composition is skewed to polar residues; sequence SQTHQVSLSKQPTSQP. K71 participates in a covalent cross-link: Glycyl lysine isopeptide (Lys-Gly) (interchain with G-Cter in ubiquitin). Residues 78–80 carry the Cell attachment site motif; it reads RGD. Over residues 83-96 the composition is skewed to basic and acidic residues; that stretch reads GPKESKEKVERETE.

It belongs to the lentiviruses Tat family. In terms of assembly, interacts with host CCNT1. Associates with the P-TEFb complex composed at least of Tat, P-TEFb (CDK9 and CCNT1), TAR RNA, RNA Pol II. Recruits the HATs CREBBP, TAF1/TFIID, EP300, PCAF and GCN5L2. Interacts with host KAT5/Tip60; this interaction targets the latter to degradation. Interacts with the host deacetylase SIRT1. Interacts with host capping enzyme RNGTT; this interaction stimulates RNGTT. Binds to host KDR, and to the host integrins ITGAV/ITGB3 and ITGA5/ITGB1. Interacts with host KPNB1/importin beta-1 without previous binding to KPNA1/importin alpha-1. Interacts with EIF2AK2. Interacts with host nucleosome assembly protein NAP1L1; this interaction may be required for the transport of Tat within the nucleus, since the two proteins interact at the nuclear rim. Interacts with host C1QBP/SF2P32; this interaction involves lysine-acetylated Tat. Interacts with the host chemokine receptors CCR2, CCR3 and CXCR4. Interacts with host DPP4/CD26; this interaction may trigger an anti-proliferative effect. Interacts with host LDLR. Interacts with the host extracellular matrix metalloproteinase MMP1. Interacts with host PRMT6; this interaction mediates Tat's methylation. Interacts with, and is ubiquitinated by MDM2/Hdm2. Interacts with host PSMC3 and HTATIP2. Interacts with STAB1; this interaction may overcome SATB1-mediated repression of IL2 and IL2RA (interleukin) in T cells by binding to the same domain than HDAC1. Interacts (when acetylated) with human CDK13, thereby increasing HIV-1 mRNA splicing and promoting the production of the doubly spliced HIV-1 protein Nef. Interacts with host TBP; this interaction modulates the activity of transcriptional pre-initiation complex. Interacts with host RELA. Interacts with host PLSCR1; this interaction negatively regulates Tat transactivation activity by altering its subcellular distribution. In terms of processing, asymmetrical arginine methylation by host PRMT6 seems to diminish the transactivation capacity of Tat and affects the interaction with host CCNT1. Acetylation by EP300, CREBBP, GCN5L2/GCN5 and PCAF regulates the transactivation activity of Tat. EP300-mediated acetylation of Lys-50 promotes dissociation of Tat from the TAR RNA through the competitive binding to PCAF's bromodomain. In addition, the non-acetylated Tat's N-terminus can also interact with PCAF. PCAF-mediated acetylation of Lys-28 enhances Tat's binding to CCNT1. Lys-50 is deacetylated by SIRT1. Post-translationally, polyubiquitination by host MDM2 does not target Tat to degradation, but activates its transactivation function and fosters interaction with CCNT1 and TAR RNA. In terms of processing, phosphorylated by EIF2AK2 on serine and threonine residues adjacent to the basic region important for TAR RNA binding and function. Phosphorylation of Tat by EIF2AK2 is dependent on the prior activation of EIF2AK2 by dsRNA.

It is found in the host nucleus. The protein localises to the host nucleolus. Its subcellular location is the host cytoplasm. The protein resides in the secreted. Transcriptional activator that increases RNA Pol II processivity, thereby increasing the level of full-length viral transcripts. Recognizes a hairpin structure at the 5'-LTR of the nascent viral mRNAs referred to as the transactivation responsive RNA element (TAR) and recruits the cyclin T1-CDK9 complex (P-TEFb complex) that will in turn hyperphosphorylate the RNA polymerase II to allow efficient elongation. The CDK9 component of P-TEFb and other Tat-activated kinases hyperphosphorylate the C-terminus of RNA Pol II that becomes stabilized and much more processive. Other factors such as HTATSF1/Tat-SF1, SUPT5H/SPT5, and HTATIP2 are also important for Tat's function. Besides its effect on RNA Pol II processivity, Tat induces chromatin remodeling of proviral genes by recruiting the histone acetyltransferases (HATs) CREBBP, EP300 and PCAF to the chromatin. This also contributes to the increase in proviral transcription rate, especially when the provirus integrates in transcriptionally silent region of the host genome. To ensure maximal activation of the LTR, Tat mediates nuclear translocation of NF-kappa-B by interacting with host RELA. Through its interaction with host TBP, Tat may also modulate transcription initiation. Tat can reactivate a latently infected cell by penetrating in it and transactivating its LTR promoter. In the cytoplasm, Tat is thought to act as a translational activator of HIV-1 mRNAs. In terms of biological role, extracellular circulating Tat can be endocytosed by surrounding uninfected cells via the binding to several surface receptors such as CD26, CXCR4, heparan sulfate proteoglycans (HSPG) or LDLR. Neurons are rarely infected, but they internalize Tat via their LDLR. Through its interaction with nuclear HATs, Tat is potentially able to control the acetylation-dependent cellular gene expression. Modulates the expression of many cellular genes involved in cell survival, proliferation or in coding for cytokines or cytokine receptors. Tat plays a role in T-cell and neurons apoptosis. Tat induced neurotoxicity and apoptosis probably contribute to neuroAIDS. Circulating Tat also acts as a chemokine-like and/or growth factor-like molecule that binds to specific receptors on the surface of the cells, affecting many cellular pathways. In the vascular system, Tat binds to ITGAV/ITGB3 and ITGA5/ITGB1 integrins dimers at the surface of endothelial cells and competes with bFGF for heparin-binding sites, leading to an excess of soluble bFGF. In Human immunodeficiency virus type 1 group M subtype B (isolate RF/HAT3) (HIV-1), this protein is Protein Tat.